A 223-amino-acid polypeptide reads, in one-letter code: Glutathione S-transferase A1 (223 aa).

Met1 carries the post-translational modification N-acetylmethionine. Ala2 bears the N-acetylalanine; in Glutathione S-transferase A1, N-terminally processed mark. A GST N-terminal domain is found at 3–83 (GKPVLHYFNA…YIATKYDLYG (81 aa)). Lys4 bears the N6-succinyllysine mark. Glutathione is bound by residues Tyr9, Lys45, 54–55 (QV), and 67–68 (QT). Residues 85–208 (DMKERALIDM…QPGSQRKPPM (124 aa)) enclose the GST C-terminal domain.

This sequence belongs to the GST superfamily. Alpha family. In terms of assembly, homodimer. Expressed in the liver, skin and kidney.

It carries out the reaction RX + glutathione = an S-substituted glutathione + a halide anion + H(+). The enzyme catalyses prostaglandin A2 + glutathione = prostaglandin A2-S-(R)-glutathione. It catalyses the reaction prostaglandin J2 + glutathione = prostaglandin J2-S-(R)-glutathione. The catalysed reaction is (13S)-hydroperoxy-(9Z,11E)-octadecadienoate + 2 glutathione = (13S)-hydroxy-(9Z,11E)-octadecadienoate + glutathione disulfide + H2O. It carries out the reaction androst-5-ene-3,17-dione = androst-4-ene-3,17-dione. Its function is as follows. Glutathione S-transferase that catalyzes the nucleophilic attack of the sulfur atom of glutathione on the electrophilic groups of a wide range of exogenous and endogenous compounds. Involved in the formation of glutathione conjugates of both prostaglandin A2 (PGA2) and prostaglandin J2 (PGJ2). It also catalyzes the isomerization of D5-androstene-3,17-dione (AD) into D4-androstene-3,17-dione and may therefore play an important role in hormone biosynthesis. Through its glutathione-dependent peroxidase activity toward the fatty acid hydroperoxide (13S)-hydroperoxy-(9Z,11E)-octadecadienoate/13-HPODE it is also involved in the metabolism of oxidized linoleic acid. In Mus musculus (Mouse), this protein is Glutathione S-transferase A1 (Gsta1).